A 476-amino-acid polypeptide reads, in one-letter code: Cardiolipin synthase (476 aa).

2 consecutive transmembrane segments (helical) span residues 2–22 (HLFI…IIFI) and 31–51 (WAWI…YILF). PLD phosphodiesterase domains follow at residues 207 to 234 (INYR…GDEY) and 389 to 416 (EKGF…DIRS). Catalysis depends on residues histidine 212, lysine 214, aspartate 219, histidine 394, lysine 396, and aspartate 401.

It belongs to the phospholipase D family. Cardiolipin synthase subfamily.

It is found in the cell membrane. The enzyme catalyses 2 a 1,2-diacyl-sn-glycero-3-phospho-(1'-sn-glycerol) = a cardiolipin + glycerol. Its function is as follows. Catalyzes the reversible phosphatidyl group transfer from one phosphatidylglycerol molecule to another to form cardiolipin (CL) (diphosphatidylglycerol) and glycerol. The protein is Cardiolipin synthase (cls) of Clostridium perfringens (strain 13 / Type A).